The primary structure comprises 116 residues: Ribosome-binding factor A (116 aa).

This sequence belongs to the RbfA family. In terms of assembly, monomer. Binds 30S ribosomal subunits, but not 50S ribosomal subunits or 70S ribosomes.

The protein localises to the cytoplasm. One of several proteins that assist in the late maturation steps of the functional core of the 30S ribosomal subunit. Associates with free 30S ribosomal subunits (but not with 30S subunits that are part of 70S ribosomes or polysomes). Required for efficient processing of 16S rRNA. May interact with the 5'-terminal helix region of 16S rRNA. The protein is Ribosome-binding factor A of Streptococcus mutans serotype c (strain ATCC 700610 / UA159).